Consider the following 461-residue polypeptide: Tubulin gamma-2 chain (461 aa).

142–148 (AGGTGSG) contributes to the GTP binding site.

Belongs to the tubulin family.

Its subcellular location is the cytoplasm. It localises to the cytoskeleton. The protein localises to the microtubule organizing center. It is found in the centrosome. In terms of biological role, tubulin is the major constituent of microtubules. The gamma chain is found at microtubule organizing centers (MTOC) such as the spindle poles or the centrosome, suggesting that it is involved in the minus-end nucleation of microtubule assembly. This chain is Tubulin gamma-2 chain, found in Euplotoides octocarinatus (Freshwater ciliate).